Consider the following 113-residue polypeptide: Holo-[acyl-carrier-protein] synthase (113 aa).

Residues Asp8 and Glu57 each contribute to the Mg(2+) site.

Belongs to the P-Pant transferase superfamily. AcpS family. It depends on Mg(2+) as a cofactor.

The protein localises to the cytoplasm. It catalyses the reaction apo-[ACP] + CoA = holo-[ACP] + adenosine 3',5'-bisphosphate + H(+). Its function is as follows. Transfers the 4'-phosphopantetheine moiety from coenzyme A to a Ser of acyl-carrier-protein. This chain is Holo-[acyl-carrier-protein] synthase, found in Thermodesulfovibrio yellowstonii (strain ATCC 51303 / DSM 11347 / YP87).